A 307-amino-acid chain; its full sequence is Solute carrier family 25 member 53 (307 aa).

Positions 1–23 (MGEQNHSPGKELQHRTRAEAPGK) are disordered. Positions 8-22 (PGKELQHRTRAEAPG) are enriched in basic and acidic residues. 3 Solcar repeats span residues 25–105 (SWHS…LLCF), 112–202 (HTLG…IQDG), and 210–302 (HWVP…HSRK). The next 6 helical transmembrane spans lie at 31–51 (YALG…IYKV), 82–102 (YPPL…YDSL), 112–132 (HTLG…AVAL), 181–201 (VLAR…PIQD), 215–235 (LVSG…LIVL), and 269–290 (IYRG…TTAI).

It belongs to the mitochondrial carrier (TC 2.A.29) family.

It localises to the mitochondrion inner membrane. This chain is Solute carrier family 25 member 53 (SLC25A53), found in Homo sapiens (Human).